The following is a 224-amino-acid chain: V-type ATP synthase subunit D (224 aa).

The tract at residues 190 to 224 (REAGYTQKKIKAKIEGKNKEAREAAAATSHGSAAD) is disordered. Over residues 201–212 (AKIEGKNKEARE) the composition is skewed to basic and acidic residues. Positions 213–224 (AAAATSHGSAAD) are enriched in low complexity.

The protein belongs to the V-ATPase D subunit family.

Its function is as follows. Produces ATP from ADP in the presence of a proton gradient across the membrane. The sequence is that of V-type ATP synthase subunit D (atpD) from Deinococcus radiodurans (strain ATCC 13939 / DSM 20539 / JCM 16871 / CCUG 27074 / LMG 4051 / NBRC 15346 / NCIMB 9279 / VKM B-1422 / R1).